A 415-amino-acid chain; its full sequence is Gamma-glutamyl phosphate reductase (415 aa).

The protein belongs to the gamma-glutamyl phosphate reductase family.

The protein resides in the cytoplasm. The catalysed reaction is L-glutamate 5-semialdehyde + phosphate + NADP(+) = L-glutamyl 5-phosphate + NADPH + H(+). It participates in amino-acid biosynthesis; L-proline biosynthesis; L-glutamate 5-semialdehyde from L-glutamate: step 2/2. In terms of biological role, catalyzes the NADPH-dependent reduction of L-glutamate 5-phosphate into L-glutamate 5-semialdehyde and phosphate. The product spontaneously undergoes cyclization to form 1-pyrroline-5-carboxylate. This Listeria welshimeri serovar 6b (strain ATCC 35897 / DSM 20650 / CCUG 15529 / CIP 8149 / NCTC 11857 / SLCC 5334 / V8) protein is Gamma-glutamyl phosphate reductase.